The sequence spans 380 residues: Cytochrome b (380 aa).

Helical transmembrane passes span 34–54 (FGSL…LLAM), 78–99 (WLIR…YLHI), 114–134 (WNTG…GYVL), and 179–199 (FFAL…IHLT). Heme b contacts are provided by histidine 84 and histidine 98. Heme b contacts are provided by histidine 183 and histidine 197. Histidine 202 contacts a ubiquinone. 4 helical membrane-spanning segments follow: residues 227 to 247 (LKDI…ALFS), 289 to 309 (LGGV…PFLH), 321 to 341 (LSQL…WVGS), and 348 to 368 (FIII…ILFP).

It belongs to the cytochrome b family. As to quaternary structure, the cytochrome bc1 complex contains 11 subunits: 3 respiratory subunits (MT-CYB, CYC1 and UQCRFS1), 2 core proteins (UQCRC1 and UQCRC2) and 6 low-molecular weight proteins (UQCRH/QCR6, UQCRB/QCR7, UQCRQ/QCR8, UQCR10/QCR9, UQCR11/QCR10 and a cleavage product of UQCRFS1). This cytochrome bc1 complex then forms a dimer. It depends on heme b as a cofactor.

Its subcellular location is the mitochondrion inner membrane. Its function is as follows. Component of the ubiquinol-cytochrome c reductase complex (complex III or cytochrome b-c1 complex) that is part of the mitochondrial respiratory chain. The b-c1 complex mediates electron transfer from ubiquinol to cytochrome c. Contributes to the generation of a proton gradient across the mitochondrial membrane that is then used for ATP synthesis. This Ardenna tenuirostris (Short-tailed shearwater) protein is Cytochrome b (MT-CYB).